Consider the following 350-residue polypeptide: GTPase Obg (350 aa).

The Obg domain occupies 1–159; that stretch reads MKLVDEAEIE…RTLKLELKLL (159 aa). Positions 126–147 are disordered; the sequence is GNMHFKSSTNRSPRQALPGEPG. An OBG-type G domain is found at 160–337; that stretch reads ADVGLLGFPN…IMSRIMAFFD (178 aa). GTP-binding positions include 166–173, 191–195, 213–216, 287–290, and 318–320; these read GFPNAGKS, FTTLY, DIPG, NKAD, and SAL. Residues S173 and T193 each coordinate Mg(2+).

It belongs to the TRAFAC class OBG-HflX-like GTPase superfamily. OBG GTPase family. Monomer. It depends on Mg(2+) as a cofactor.

Its subcellular location is the cytoplasm. Its function is as follows. An essential GTPase which binds GTP, GDP and possibly (p)ppGpp with moderate affinity, with high nucleotide exchange rates and a fairly low GTP hydrolysis rate. Plays a role in control of the cell cycle, stress response, ribosome biogenesis and in those bacteria that undergo differentiation, in morphogenesis control. This is GTPase Obg from Stenotrophomonas maltophilia (strain K279a).